Consider the following 283-residue polypeptide: 4-diphosphocytidyl-2-C-methyl-D-erythritol kinase (283 aa).

Lysine 10 is a catalytic residue. Proline 99 to serine 109 lines the ATP pocket. Aspartate 141 is a catalytic residue.

The protein belongs to the GHMP kinase family. IspE subfamily. As to quaternary structure, homodimer.

The enzyme catalyses 4-CDP-2-C-methyl-D-erythritol + ATP = 4-CDP-2-C-methyl-D-erythritol 2-phosphate + ADP + H(+). It participates in isoprenoid biosynthesis; isopentenyl diphosphate biosynthesis via DXP pathway; isopentenyl diphosphate from 1-deoxy-D-xylulose 5-phosphate: step 3/6. In terms of biological role, catalyzes the phosphorylation of the position 2 hydroxy group of 4-diphosphocytidyl-2C-methyl-D-erythritol. The protein is 4-diphosphocytidyl-2-C-methyl-D-erythritol kinase of Escherichia coli O157:H7 (strain EC4115 / EHEC).